Consider the following 469-residue polypeptide: Adenosylhomocysteinase (469 aa).

Threonine 63, aspartate 139, and glutamate 164 together coordinate substrate. Residue 165 to 167 participates in NAD(+) binding; it reads TTT. Lysine 194 and aspartate 198 together coordinate substrate. NAD(+) is bound by residues asparagine 199, 228-233, glutamate 251, asparagine 300, 321-323, and asparagine 375; these read GYGDVG and IGH.

Belongs to the adenosylhomocysteinase family. NAD(+) is required as a cofactor.

The protein resides in the cytoplasm. The catalysed reaction is S-adenosyl-L-homocysteine + H2O = L-homocysteine + adenosine. The protein operates within amino-acid biosynthesis; L-homocysteine biosynthesis; L-homocysteine from S-adenosyl-L-homocysteine: step 1/1. In terms of biological role, may play a key role in the regulation of the intracellular concentration of adenosylhomocysteine. The protein is Adenosylhomocysteinase of Pseudomonas syringae pv. tomato (strain ATCC BAA-871 / DC3000).